Consider the following 432-residue polypeptide: Alpha-enolase (432 aa).

Ser40 lines the Mg(2+) pocket. Substrate-binding residues include His158 and Glu167. The active-site Proton donor is the Glu210. Mg(2+) is bound by residues Asp245, Glu293, and Asp318. Substrate contacts are provided by Glu293 and Asp318. The active-site Proton acceptor is the Lys343. Substrate is bound by residues 370 to 373 (SHRS) and Lys394.

This sequence belongs to the enolase family. In terms of assembly, dimer. The cofactor is Mg(2+).

The protein resides in the cytoplasm. It catalyses the reaction (2R)-2-phosphoglycerate = phosphoenolpyruvate + H2O. The protein operates within carbohydrate degradation; glycolysis; pyruvate from D-glyceraldehyde 3-phosphate: step 4/5. Functionally, multifunctional enzyme that, as well as its role in glycolysis, plays a part in various processes such as growth control, hypoxia tolerance and allergic responses. The chain is Alpha-enolase from Thunnus albacares (Yellowfin tuna).